Consider the following 73-residue polypeptide: Conotoxin Lt9a (73 aa).

Residues 1–23 (MTLTKSAVLILVLLLAFDNFADV) form the signal peptide. A propeptide spanning residues 24 to 40 (QPGLITMGGGRLSNLLS) is cleaved from the precursor. 3 disulfide bridges follow: cysteine 48-cysteine 62, cysteine 53-cysteine 64, and cysteine 59-cysteine 69.

It belongs to the conotoxin P superfamily. As to expression, expressed by the venom duct.

It is found in the secreted. In terms of biological role, probable neurotoxin that inhibits ion channels. This chain is Conotoxin Lt9a, found in Conus litteratus (Lettered cone).